A 282-amino-acid polypeptide reads, in one-letter code: MTLLDGKALSAKIKEELKEKNQFLKSKGIESCLAVILVGNNPASQTYVKSKAKACEECGIKSLVYHLNENTTQNELLALINTLNHDDSVHGILVQLPLPDHICKDLILESIISSKDVDGFHPINVGYLNLGLESGFLPCTPLGVMKLLKAYEIDLKGKDAVIIGASNIVGRPMATMLLNAGATVSVCHIKTKDLSLYTRQADLIIVAAGCVNLLRSDMVKEGVIVVDVGINRLESGKIVGDVDFEEVSKKSSYITPVPCGVGPMTIAMLLENTVKSAKNRLN.

NADP(+) contacts are provided by residues 164–166 (GAS), isoleucine 189, and isoleucine 230.

Belongs to the tetrahydrofolate dehydrogenase/cyclohydrolase family. In terms of assembly, homodimer.

It carries out the reaction (6R)-5,10-methylene-5,6,7,8-tetrahydrofolate + NADP(+) = (6R)-5,10-methenyltetrahydrofolate + NADPH. It catalyses the reaction (6R)-5,10-methenyltetrahydrofolate + H2O = (6R)-10-formyltetrahydrofolate + H(+). The protein operates within one-carbon metabolism; tetrahydrofolate interconversion. Functionally, catalyzes the oxidation of 5,10-methylenetetrahydrofolate to 5,10-methenyltetrahydrofolate and then the hydrolysis of 5,10-methenyltetrahydrofolate to 10-formyltetrahydrofolate. This is Bifunctional protein FolD from Campylobacter jejuni subsp. doylei (strain ATCC BAA-1458 / RM4099 / 269.97).